We begin with the raw amino-acid sequence, 170 residues long: Translocator protein 2 (170 aa).

5 helical membrane-spanning segments follow: residues 3–23 (LQGA…WLFT), 45–65 (VLLL…YLVW), 78–98 (LPLG…VLFF), 104–124 (GLAL…ALIW), and 130–150 (LAAL…ALTY).

It belongs to the TspO/BZRP family. As to quaternary structure, homotetramer. May also form homodimer. Expressed in erythrocytes (at protein level).

The protein localises to the endoplasmic reticulum membrane. It is found in the cell membrane. In terms of biological role, cholesterol-binding protein involved in the redistribution of cholesterol from lipid droplets to the endoplasmic reticulum. Required to meet cholesterol demands during erythropoietic differentiation. May play a role in transport processes at the plasma membrane of erythrocytes, including regulating VDAC-mediated ATP export, and import of the heme precursors protoporphyrin IX and 5-aminolevulinic acid. The sequence is that of Translocator protein 2 (TSPO2) from Homo sapiens (Human).